The chain runs to 392 residues: Digeranylgeranylglycerophospholipid reductase (392 aa).

FAD is bound by residues G15, E34, C45, A46, G48, R99, A123, D279, G291, and I292. Residue V370 coordinates a 2,3-bis-O-(geranylgeranyl)-sn-glycerol 1-phospholipid.

This sequence belongs to the geranylgeranyl reductase family. DGGGPL reductase subfamily. Requires FAD as cofactor.

The enzyme catalyses a 2,3-bis-O-phytanyl-sn-glycerol 1-phospholipid + 8 oxidized 2[4Fe-4S]-[ferredoxin] = a 2,3-bis-O-(geranylgeranyl)-sn-glycerol 1-phospholipid + 8 reduced 2[4Fe-4S]-[ferredoxin] + 16 H(+). The catalysed reaction is 2,3-bis-O-(phytanyl)-sn-glycerol 1-phosphate + 8 oxidized 2[4Fe-4S]-[ferredoxin] = 2,3-bis-O-(geranylgeranyl)-sn-glycerol 1-phosphate + 8 reduced 2[4Fe-4S]-[ferredoxin] + 16 H(+). It carries out the reaction a 2,3-bis-O-phytanyl-sn-glycerol 1-phospholipid + 8 A = a 2,3-bis-O-(geranylgeranyl)-sn-glycerol 1-phospholipid + 8 AH2. It catalyses the reaction CDP-2,3-bis-O-(geranylgeranyl)-sn-glycerol + 8 AH2 = CDP-2,3-bis-O-(phytanyl)-sn-glycerol + 8 A. The enzyme catalyses archaetidylserine + 8 AH2 = 2,3-bis-O-phytanyl-sn-glycero-3-phospho-L-serine + 8 A. Its pathway is membrane lipid metabolism; glycerophospholipid metabolism. Functionally, is involved in the reduction of 2,3-digeranylgeranylglycerophospholipids (unsaturated archaeols) into 2,3-diphytanylglycerophospholipids (saturated archaeols) in the biosynthesis of archaeal membrane lipids. Catalyzes the formation of archaetidic acid (2,3-di-O-phytanyl-sn-glyceryl phosphate) from 2,3-di-O-geranylgeranylglyceryl phosphate (DGGGP) via the hydrogenation of each double bond of the isoprenoid chains. Is also probably able to reduce double bonds of geranyl groups in CDP-2,3-bis-O-(geranylgeranyl)-sn-glycerol and archaetidylserine, thus acting at various stages in the biosynthesis of archaeal membrane lipids. The sequence is that of Digeranylgeranylglycerophospholipid reductase from Methanocella arvoryzae (strain DSM 22066 / NBRC 105507 / MRE50).